Here is a 570-residue protein sequence, read N- to C-terminus: Glycine--tRNA ligase (570 aa).

2 residues coordinate substrate: R99 and E165. ATP-binding positions include 197 to 199 (RNE), 207 to 212 (LRLREF), 324 to 325 (EC), and 443 to 446 (GIDR). A substrate-binding site is contributed by 212 to 216 (FSQAE). 439 to 443 (EPSFG) serves as a coordination point for substrate.

It belongs to the class-II aminoacyl-tRNA synthetase family.

The protein resides in the cytoplasm. The enzyme catalyses tRNA(Gly) + glycine + ATP = glycyl-tRNA(Gly) + AMP + diphosphate. Its function is as follows. Catalyzes the attachment of glycine to tRNA(Gly). This is Glycine--tRNA ligase from Thermococcus sibiricus (strain DSM 12597 / MM 739).